A 359-amino-acid polypeptide reads, in one-letter code: Type-1 angiotensin II receptor (359 aa).

At 1-25 the chain is on the extracellular side; the sequence is MILNSSTEDGIKRIQDDCPKAGRHS. Asn-4 is a glycosylation site (N-linked (GlcNAc...) asparagine). The angiotensin II site is built by Gln-15 and Asp-17. 2 disulfides stabilise this stretch: Cys-18–Cys-274 and Cys-101–Cys-180. A helical membrane pass occupies residues 26–55; that stretch reads YIFVMIPTLYSIIFVVGIFGNSLVVIVIYF. The Cytoplasmic portion of the chain corresponds to 56–61; it reads YMKLKT. Residues 62–89 traverse the membrane as a helical segment; the sequence is VASVFLLNLALADICFLLTLPLWAVYTA. The Extracellular portion of the chain corresponds to 90-98; the sequence is MEYRWPFGN. The chain crosses the membrane as a helical span at residues 99 to 125; that stretch reads YLCKIASASVSFNLYASVFLLTCLSID. Residues 126–141 lie on the Cytoplasmic side of the membrane; it reads RYLAIVHPMKSRLRRT. Residues 142–165 form a helical membrane-spanning segment; it reads MLVAKVTCVIIWLMAGLASLPAVI. Topologically, residues 166–190 are extracellular; that stretch reads HRNVFFIENTNITVCAFHYESQNST. Arg-167 lines the angiotensin II pocket. The N-linked (GlcNAc...) asparagine glycan is linked to Asn-176. Angiotensin II contacts are provided by Phe-182, His-183, and Tyr-184. N-linked (GlcNAc...) asparagine glycosylation occurs at Asn-188. The chain crosses the membrane as a helical span at residues 191 to 216; it reads LPIGLGLTKNILGFMFPFLIILTSYT. Lys-199 is an angiotensin II binding site. The Cytoplasmic portion of the chain corresponds to 217–239; sequence LIWKALKKAYEIQKNKPRNDDIF. A helical membrane pass occupies residues 240–268; sequence KIIMAIVLFFFFSWVPHQIFTFLDVLIQL. Topologically, residues 269–278 are extracellular; the sequence is GIIHDCKISD. The chain crosses the membrane as a helical span at residues 279-304; it reads IVDTAMPITICIAYFNNCLNPLFYGF. At 305–359 the chain is on the cytoplasmic side; that stretch reads LGKKFKKYFLQLLKYIPPKAKSHSTLSTKMSTLSYRPSDNVSSSAKKPVQCFEVE. A compositionally biased stretch (polar residues) spans 337–349; sequence LSYRPSDNVSSSA. Residues 337–359 are disordered; that stretch reads LSYRPSDNVSSSAKKPVQCFEVE. The S-palmitoyl cysteine moiety is linked to residue Cys-355.

Belongs to the G-protein coupled receptor 1 family. In terms of assembly, interacts with MAS1. Interacts with ARRB1. Interacts with FLNA (via filamin repeat 21); increases PKA-mediated phosphorylation of FLNA. Post-translationally, C-terminal Ser or Thr residues may be phosphorylated. As to expression, expressed in liver, kidney, adrenal gland, heart and colon.

It localises to the cell membrane. Functionally, receptor for angiotensin II, a vasoconstricting peptide, which acts as a key regulator of blood pressure and sodium retention by the kidney. The activated receptor in turn couples to G-alpha proteins G(q) (GNAQ, GNA11, GNA14 or GNA15) and thus activates phospholipase C and increases the cytosolic Ca(2+) concentrations, which in turn triggers cellular responses such as stimulation of protein kinase C. The polypeptide is Type-1 angiotensin II receptor (AGTR1) (Cavia porcellus (Guinea pig)).